A 577-amino-acid polypeptide reads, in one-letter code: PTS system lactose-specific EIICB component (577 aa).

Positions 4–405 constitute a PTS EIIC type-3 domain; sequence VFDKLKPVFE…VLDVAIYFPF (402 aa). The next 9 membrane-spanning stretches (helical) occupy residues 27–47, 63–83, 100–120, 133–153, 176–196, 219–239, 280–300, 326–346, and 386–406; these read GFIACMPIIIFSSIFMMVAYV, LMVAYNYSMGLLALFVAGTTA, INPVAVIVASEISFVILSILP, QGLICAYIVGLIVPNIYYVCI, LIPMGLSVTAFWLFGVGFKAA, YLGLALIAGAMAFFWFCGVQG, VMNFGGTGATLVVPFIMLFAA, FGMPIIMNPMLFIPFLATPIV, and LAFVFVLLTLVLDVAIYFPFI. In terms of domain architecture, PTS EIIB type-3 spans 476–577; sequence EVDVLVLCAG…MALDFVESNL (102 aa). The active-site Phosphocysteine intermediate; for EIIB activity is the Cys-483. Phosphocysteine; by EIIA is present on Cys-483.

It localises to the cell membrane. The enzyme catalyses lactose(out) + N(pros)-phospho-L-histidyl-[protein] = lactose 6-phosphate(in) + L-histidyl-[protein]. In terms of biological role, the phosphoenolpyruvate-dependent sugar phosphotransferase system (sugar PTS), a major carbohydrate active transport system, catalyzes the phosphorylation of incoming sugar substrates concomitantly with their translocation across the cell membrane. The enzyme II LacEF PTS system is involved in lactose transport. This chain is PTS system lactose-specific EIICB component, found in Lacticaseibacillus casei (Lactobacillus casei).